The following is a 172-amino-acid chain: Acetolactate synthase small subunit (172 aa).

Positions 4 to 78 (TLSVLVEDEA…NILKVDNITE (75 aa)) constitute an ACT domain.

The protein belongs to the acetolactate synthase small subunit family. In terms of assembly, dimer of large and small chains.

Its subcellular location is the plastid. It is found in the chloroplast. It carries out the reaction 2 pyruvate + H(+) = (2S)-2-acetolactate + CO2. Its pathway is amino-acid biosynthesis; L-isoleucine biosynthesis; L-isoleucine from 2-oxobutanoate: step 1/4. It participates in amino-acid biosynthesis; L-valine biosynthesis; L-valine from pyruvate: step 1/4. This Cyanidium caldarium (Red alga) protein is Acetolactate synthase small subunit (ilvH).